Consider the following 186-residue polypeptide: MKSRLLFLGPPGAGKGTQAKLLCENQGLIHLSTGDLLRAEVNAQSPLGKEAALIMNKGELVSDEIVLSIVQKRLSADAKSGWLLDGFPRNLIQAQSLQQLLENVSQPIQAVLLIELDDETLIKRLLSRGRSDDTQEVIRHRLEVYREKTAPLVDFYQSLGILVKIQGEGDVKDVALTIRSALGLVM.

12–17 (GAGKGT) contacts ATP. Residues 32-61 (STGDLLRAEVNAQSPLGKEAALIMNKGELV) are NMP. Residues T33, R38, 59–61 (ELV), 86–89 (GFPR), and Q93 each bind AMP. Positions 127–133 (SRGRSDD) are LID. Residue R128 participates in ATP binding. Residues R130 and R141 each coordinate AMP. G169 contributes to the ATP binding site.

The protein belongs to the adenylate kinase family. As to quaternary structure, monomer.

The protein localises to the cytoplasm. The catalysed reaction is AMP + ATP = 2 ADP. The protein operates within purine metabolism; AMP biosynthesis via salvage pathway; AMP from ADP: step 1/1. Its function is as follows. Catalyzes the reversible transfer of the terminal phosphate group between ATP and AMP. Plays an important role in cellular energy homeostasis and in adenine nucleotide metabolism. In Prochlorococcus marinus (strain MIT 9211), this protein is Adenylate kinase.